The sequence spans 61 residues: Photosystem II reaction center protein K (61 aa).

Positions 1-24 are excised as a propeptide; that stretch reads MLNTFSLIGICLNSTLYSSSFFFG. The helical transmembrane segment at 36-56 threads the bilayer; it reads IVDIMPVIPLFFFLLAFVWQA.

It belongs to the PsbK family. In terms of assembly, PSII is composed of 1 copy each of membrane proteins PsbA, PsbB, PsbC, PsbD, PsbE, PsbF, PsbH, PsbI, PsbJ, PsbK, PsbL, PsbM, PsbT, PsbX, PsbY, PsbZ, Psb30/Ycf12, at least 3 peripheral proteins of the oxygen-evolving complex and a large number of cofactors. It forms dimeric complexes.

It is found in the plastid. The protein localises to the chloroplast thylakoid membrane. Its function is as follows. One of the components of the core complex of photosystem II (PSII). PSII is a light-driven water:plastoquinone oxidoreductase that uses light energy to abstract electrons from H(2)O, generating O(2) and a proton gradient subsequently used for ATP formation. It consists of a core antenna complex that captures photons, and an electron transfer chain that converts photonic excitation into a charge separation. This chain is Photosystem II reaction center protein K, found in Solanum bulbocastanum (Wild potato).